The chain runs to 857 residues: Alanine--tRNA ligase (857 aa).

Residues His556, His560, Cys658, and His662 each contribute to the Zn(2+) site.

The protein belongs to the class-II aminoacyl-tRNA synthetase family. The cofactor is Zn(2+).

It localises to the cytoplasm. It catalyses the reaction tRNA(Ala) + L-alanine + ATP = L-alanyl-tRNA(Ala) + AMP + diphosphate. Catalyzes the attachment of alanine to tRNA(Ala) in a two-step reaction: alanine is first activated by ATP to form Ala-AMP and then transferred to the acceptor end of tRNA(Ala). Also edits incorrectly charged Ser-tRNA(Ala) and Gly-tRNA(Ala) via its editing domain. This is Alanine--tRNA ligase from Sulfurovum sp. (strain NBC37-1).